We begin with the raw amino-acid sequence, 627 residues long: DNA mismatch repair protein MutL (627 aa).

The disordered stretch occupies residues 376–404; the sequence is APASTNEVREGSAARAGNYQPPEPPSREA.

It belongs to the DNA mismatch repair MutL/HexB family.

Its function is as follows. This protein is involved in the repair of mismatches in DNA. It is required for dam-dependent methyl-directed DNA mismatch repair. May act as a 'molecular matchmaker', a protein that promotes the formation of a stable complex between two or more DNA-binding proteins in an ATP-dependent manner without itself being part of a final effector complex. In Aeromonas salmonicida (strain A449), this protein is DNA mismatch repair protein MutL.